The sequence spans 154 residues: 3-dehydroquinate dehydratase (154 aa).

The Proton acceptor role is filled by Tyr23. The substrate site is built by Asn75, His81, and Asp88. Residue His101 is the Proton donor of the active site. Substrate contacts are provided by residues 102–103 (LS) and Arg112.

This sequence belongs to the type-II 3-dehydroquinase family. Homododecamer.

The enzyme catalyses 3-dehydroquinate = 3-dehydroshikimate + H2O. It participates in metabolic intermediate biosynthesis; chorismate biosynthesis; chorismate from D-erythrose 4-phosphate and phosphoenolpyruvate: step 3/7. Catalyzes a trans-dehydration via an enolate intermediate. The polypeptide is 3-dehydroquinate dehydratase (Teredinibacter turnerae (strain ATCC 39867 / T7901)).